The sequence spans 298 residues: Inosose dehydratase (298 aa).

The protein belongs to the IolE/MocC family. The cofactor is glutathione. Co(2+) serves as cofactor. Mn(2+) is required as a cofactor.

It catalyses the reaction scyllo-inosose = 3D-3,5/4-trihydroxycyclohexane-1,2-dione + H2O. The protein operates within polyol metabolism; myo-inositol degradation into acetyl-CoA; acetyl-CoA from myo-inositol: step 2/7. Catalyzes the dehydration of inosose (2-keto-myo-inositol, 2KMI or 2,4,6/3,5-pentahydroxycyclohexanone) to 3D-(3,5/4)-trihydroxycyclohexane-1,2-dione (D-2,3-diketo-4-deoxy-epi-inositol). This is Inosose dehydratase from Geobacillus thermodenitrificans (strain NG80-2).